A 304-amino-acid polypeptide reads, in one-letter code: Coenzyme PQQ synthesis protein B (304 aa).

It belongs to the PqqB family.

It functions in the pathway cofactor biosynthesis; pyrroloquinoline quinone biosynthesis. Its function is as follows. May be involved in the transport of PQQ or its precursor to the periplasm. This is Coenzyme PQQ synthesis protein B from Gluconobacter oxydans (strain 621H) (Gluconobacter suboxydans).